Here is a 93-residue protein sequence, read N- to C-terminus: Alpha-defensin 22 (93 aa).

An N-terminal signal peptide occupies residues 1–19 (MKKLVLLSALVLLAYQVQT). Positions 20–58 (DPIQNTDEETNTEEQPGEEDQAVSVSFGGQEGSALHEKL) are excised as a propeptide. Positions 22–41 (IQNTDEETNTEEQPGEEDQA) are disordered. The span at 25 to 40 (TDEETNTEEQPGEEDQ) shows a compositional bias: acidic residues. 3 disulfides stabilise this stretch: Cys-64–Cys-89, Cys-66–Cys-81, and Cys-71–Cys-88.

The protein belongs to the alpha-defensin family.

The protein localises to the secreted. Functionally, may have microbicidal activities. The sequence is that of Alpha-defensin 22 (Defa22) from Mus musculus (Mouse).